The chain runs to 197 residues: Chaperone protein dnaJ 20, chloroplastic (197 aa).

A chloroplast-targeting transit peptide spans 1 to 60 (MKCYKSSSILSTNHHPFFYKQQPISSLQPTSIPTTISYPTRTRFSSTRIQSRLTHDDPVK). A J domain is found at 66–133 (SFYDLLGVTE…RRRVLYDRDL (68 aa)). The disordered stretch occupies residues 169–197 (SGLRRRSNQKDNNTMSWAARMRRQQQESS).

This sequence belongs to the DnaJ family. C/III subfamily. As to expression, light-grown seedlings.

It localises to the plastid. Its subcellular location is the chloroplast. Its function is as follows. Plays a continuous role in plant development probably in the structural organization of compartments. The polypeptide is Chaperone protein dnaJ 20, chloroplastic (ATJ20) (Arabidopsis thaliana (Mouse-ear cress)).